An 801-amino-acid chain; its full sequence is Cadherin-20 (801 aa).

An N-terminal signal peptide occupies residues 1 to 34 (MWTTGRMSNAKSWLGLGTSLYFWALMDLATTVLS). Positions 35-59 (STPMPEVELDTLFSGKPQSHQRSRR) are excised as a propeptide. Residues 60-619 (SWVWNQFFVL…AYMLPVSLSR (560 aa)) are Extracellular-facing. Cadherin domains follow at residues 61–165 (WVWN…EPKF), 166–274 (LDGP…PPRF), 275–389 (PQKH…PPVF), 390–494 (EPRF…APEF), and 494–610 (FPRF…SPEA). N-linked (GlcNAc...) asparagine glycosylation occurs at N261. N420, N461, and N542 each carry an N-linked (GlcNAc...) asparagine glycan. The chain crosses the membrane as a helical span at residues 620-640 (GALIAILACVFVLLVLVLLIL). Residues 641–801 (SMRRHRKQPY…GASEGPSPLW (161 aa)) are Cytoplasmic-facing.

The protein resides in the cell membrane. Cadherins are calcium-dependent cell adhesion proteins. They preferentially interact with themselves in a homophilic manner in connecting cells; cadherins may thus contribute to the sorting of heterogeneous cell types. This chain is Cadherin-20 (Cdh20), found in Rattus norvegicus (Rat).